The chain runs to 265 residues: Iron(3+)-hydroxamate import ATP-binding protein FhuC (265 aa).

The 237-residue stretch at 12-248 (FALRNISFRV…ETLEMIYGIP (237 aa)) folds into the ABC transporter domain. Residues 44–51 (GHNGSGKS) and 168–179 (CLLLDEPTSALD) each bind ATP.

Belongs to the ABC transporter superfamily. Iron (Fe3+)-hydroxamate importer (TC 3.A.1.14.7) family. As to quaternary structure, the complex is composed of two ATP-binding proteins (FhuC), a transmembrane protein (FhuB) and a solute-binding protein (FhuD). FhuC interacts with FhuB.

It localises to the cell inner membrane. The enzyme catalyses ATP + H2O + Fe(3+)-hydroxamate complex-[hydroxamate-binding protein]Side 1 = ADP + phosphate + Fe(3+)-hydroxamate complexSide 2 + [hydroxamate-binding protein]Side 1.. With respect to regulation, ATPase activity is inhibited by vanadate. In terms of biological role, part of the ABC transporter complex FhuCDB involved in iron(3+)-hydroxamate import. Responsible for energy coupling to the transport system. The polypeptide is Iron(3+)-hydroxamate import ATP-binding protein FhuC (fhuC) (Escherichia coli (strain K12)).